A 182-amino-acid chain; its full sequence is Protein transport protein gos1 (182 aa).

The Cytoplasmic segment spans residues 1-163; it reads MKSMLLRDSV…RKTSIRRRRD (163 aa). Residues 164–181 traverse the membrane as a helical; Anchor for type IV membrane protein segment; sequence SIILALLISVLMLLFLFF. Residue H182 is a topological domain, vesicular.

It belongs to the GOSR1 family. As to quaternary structure, component of a SNARE complex consisting of sed5, gos1, ykt6, and sft1.

Its subcellular location is the golgi apparatus membrane. Functionally, nonessential SNARE involved in retrograde transport within the Golgi complex. This is Protein transport protein gos1 (gos1) from Schizosaccharomyces pombe (strain 972 / ATCC 24843) (Fission yeast).